Reading from the N-terminus, the 275-residue chain is Transmembrane protein 106B (275 aa).

The interval 1-24 (MGKSLSHLPLHSNKEDGYDGVTST) is disordered. Gly-2 carries N-myristoyl glycine lipidation. Residues 2 to 97 (GKSLSHLPLH…QRLRPRRTKL (96 aa)) are Cytoplasmic-facing. At Ser-34 the chain carries Phosphoserine. Residues 98 to 118 (YVMASVFVCLLLSGLAVFFLF) traverse the membrane as a helical segment. Topologically, residues 119–275 (PRSIDVKYIG…EYLNVLQPQQ (157 aa)) are lumenal. 4 N-linked (GlcNAc...) asparagine glycosylation sites follow: Asn-146, Asn-152, Asn-165, and Asn-184. Cys-215 and Cys-254 are oxidised to a cystine. Asn-257 is a glycosylation site (N-linked (GlcNAc...) asparagine).

The protein belongs to the TMEM106 family. Can form homomers. Interacts (via N-terminus) with MAP6 (via C-terminus). Interacts (via C-terminus) with the vacuolar-type ATPase subunit ATP6AP1. Interacts (via N-terminus) with AP2M1 and CLTC. Interacts with TMEM106C. In terms of tissue distribution, expressed in cortical neurons (at protein level).

It localises to the late endosome membrane. It is found in the lysosome membrane. The protein localises to the cell membrane. Involved in dendrite morphogenesis and maintenance by regulating lysosomal trafficking. May act as a molecular brake for retrograde transport of late endosomes/lysosomes, possibly via its interaction with MAP6. In neurons, may also play a role in the regulation of lysosomal size and responsiveness to stress. Required for proper lysosomal acidification. Functionally, in neurons, involved in the transport of late endosomes/lysosomes. May be involved in dendrite morphogenesis and maintenance by regulating lysosomal trafficking. May act as a molecular brake for retrograde transport of late endosomes/lysosomes, possibly via its interaction with MAP6. In motoneurons, may mediate the axonal transport of lysosomes and axonal sorting at the initial segment. It remains unclear whether TMEM106B affects the transport of moving lysosomes in the anterograde or retrograde direction in neurites and whether it is particularly important in the sorting of lysosomes in axons or in dendrites. In neurons, may also play a role in the regulation of lysosomal size and responsiveness to stress. Required for proper lysosomal acidification. This is Transmembrane protein 106B (Tmem106b) from Rattus norvegicus (Rat).